Reading from the N-terminus, the 635-residue chain is Nuclear distribution protein nudE homolog 1 (635 aa).

Residues 14 to 192 (EKEIKHWKSK…TILRDLVTRS (179 aa)) are a coiled coil. 5 disordered regions span residues 35–63 (ESSL…NKTI), 200–267 (TMAS…LSRD), 279–328 (VLDD…SARA), 389–504 (SRVV…DHDP), and 516–635 (AAQA…TETF). The span at 43 to 56 (ESSKELEQEMEKEL) shows a compositional bias: basic and acidic residues. Composition is skewed to polar residues over residues 201 to 224 (MASS…SPIK) and 237 to 246 (SRQALSSPVT). Low complexity predominate over residues 280 to 299 (LDDSPTATTTSAAPTRSSTL). 2 stretches are compositionally biased toward polar residues: residues 314 to 326 (ASTS…SPSA) and 411 to 428 (GSPS…TSTP). Residues 516 to 541 (AAQASVAKRRTSMSGSGMSHSASHGS) are compositionally biased toward low complexity. 2 stretches are compositionally biased toward polar residues: residues 547 to 571 (SGST…SSMT) and 580 to 619 (SKRT…PAQT). Residues 620–635 (LSRSRSSSLGSETETF) show a composition bias toward low complexity.

This sequence belongs to the nudE family. As to quaternary structure, self-associates. Interacts with PAC1.

The protein resides in the cytoplasm. The protein localises to the cytoskeleton. Its function is as follows. Required for nuclear migration. In Mycosarcoma maydis (Corn smut fungus), this protein is Nuclear distribution protein nudE homolog 1 (NDE1).